Consider the following 158-residue polypeptide: Cyclic pyranopterin monophosphate synthase (158 aa).

Substrate is bound by residues 75 to 77 and 111 to 112; these read LCH and ME. Asp-126 is a catalytic residue.

The protein belongs to the MoaC family. As to quaternary structure, homohexamer; trimer of dimers.

The catalysed reaction is (8S)-3',8-cyclo-7,8-dihydroguanosine 5'-triphosphate = cyclic pyranopterin phosphate + diphosphate. The protein operates within cofactor biosynthesis; molybdopterin biosynthesis. Its function is as follows. Catalyzes the conversion of (8S)-3',8-cyclo-7,8-dihydroguanosine 5'-triphosphate to cyclic pyranopterin monophosphate (cPMP). This Caulobacter vibrioides (strain ATCC 19089 / CIP 103742 / CB 15) (Caulobacter crescentus) protein is Cyclic pyranopterin monophosphate synthase.